We begin with the raw amino-acid sequence, 101 residues long: Small ribosomal subunit protein uS10 (101 aa).

The protein belongs to the universal ribosomal protein uS10 family. In terms of assembly, part of the 30S ribosomal subunit.

In terms of biological role, involved in the binding of tRNA to the ribosomes. This chain is Small ribosomal subunit protein uS10, found in Parabacteroides distasonis (strain ATCC 8503 / DSM 20701 / CIP 104284 / JCM 5825 / NCTC 11152).